The following is a 298-amino-acid chain: WRKY transcription factor 22 (298 aa).

2 disordered regions span residues 75–116 (EEPR…IQHK) and 181–220 (AEHNHPAPTHRNSLAGSTRQKPSDQQTSKSPTTTIATYSS). The segment covering 88 to 103 (SLSASSGSVTSKPSGS) has biased composition (low complexity). The segment covering 107–116 (RSKRRKIQHK) has biased composition (basic residues). The segment at residues 122-188 (AAEALNSDVW…YTAEHNHPAP (67 aa)) is a DNA-binding region (WRKY). A compositionally biased stretch (polar residues) spans 190–220 (HRNSLAGSTRQKPSDQQTSKSPTTTIATYSS).

This sequence belongs to the WRKY group II-e family.

The protein localises to the nucleus. Functionally, transcription factor involved in the expression of defense genes in innate immune response of plants. Interacts specifically with the W box (5'-(T)TGAC[CT]-3'), a frequently occurring elicitor-responsive cis-acting element. Activates WRKY 29, SIRK and its own promoters. The protein is WRKY transcription factor 22 (WRKY22) of Arabidopsis thaliana (Mouse-ear cress).